A 391-amino-acid chain; its full sequence is Formate-dependent phosphoribosylglycinamide formyltransferase (391 aa).

N(1)-(5-phospho-beta-D-ribosyl)glycinamide is bound by residues 20-21 (EL) and Glu80. Residues Arg112, Lys153, 158 to 163 (SSGKGQ), 193 to 196 (EGFI), and Glu201 each bind ATP. In terms of domain architecture, ATP-grasp spans 117 to 306 (RLAAETLGLP…EFALHVRAIQ (190 aa)). Mg(2+)-binding residues include Glu265 and Glu277. N(1)-(5-phospho-beta-D-ribosyl)glycinamide is bound by residues Asp284, Lys354, and 361 to 362 (RR).

This sequence belongs to the PurK/PurT family. In terms of assembly, homodimer.

It carries out the reaction N(1)-(5-phospho-beta-D-ribosyl)glycinamide + formate + ATP = N(2)-formyl-N(1)-(5-phospho-beta-D-ribosyl)glycinamide + ADP + phosphate + H(+). It functions in the pathway purine metabolism; IMP biosynthesis via de novo pathway; N(2)-formyl-N(1)-(5-phospho-D-ribosyl)glycinamide from N(1)-(5-phospho-D-ribosyl)glycinamide (formate route): step 1/1. In terms of biological role, involved in the de novo purine biosynthesis. Catalyzes the transfer of formate to 5-phospho-ribosyl-glycinamide (GAR), producing 5-phospho-ribosyl-N-formylglycinamide (FGAR). Formate is provided by PurU via hydrolysis of 10-formyl-tetrahydrofolate. This Shewanella baltica (strain OS185) protein is Formate-dependent phosphoribosylglycinamide formyltransferase.